We begin with the raw amino-acid sequence, 67 residues long: Bowman-Birk type proteinase inhibitor 1 (67 aa).

Disulfide bonds link Cys5/Cys59, Cys6/Cys21, Cys9/Cys55, Cys11/Cys19, Cys29/Cys36, Cys33/Cys48, and Cys38/Cys46.

The protein belongs to the Bowman-Birk serine protease inhibitor family. As to quaternary structure, monomer. Although dimerization may occur in solution. Seed.

Inhibits trypsin but not chymotrypsin. The inhibitor consists of 2 domains and has 2 sites of interaction with trypsin. This Dioclea glabra protein is Bowman-Birk type proteinase inhibitor 1.